The primary structure comprises 583 residues: Exonuclease 3'-5' domain-containing protein 2 (583 aa).

Over 1–11 (MTRESAVATKR) the chain is Mitochondrial intermembrane. A helical transmembrane segment spans residues 12 to 29 (NWAILAAGVGLVYVLVRH). Residues 30 to 583 (RHRLLCPLRR…AGLDAKIKET (554 aa)) lie on the Cytoplasmic side of the membrane. The region spanning 62–228 (TTQWVLNELK…AIYQKLCRDL (167 aa)) is the 3'-5' exonuclease domain. Residues Asp-83, Glu-85, and Asp-213 each coordinate a divalent metal cation. Residues 266 to 281 (GSGVTRSKGSTQSKSN) show a composition bias toward polar residues. The tract at residues 266–286 (GSGVTRSKGSTQSKSNKWVPK) is disordered.

This sequence belongs to the EXD2 family. Homodimer. Mg(2+) serves as cofactor. Mn(2+) is required as a cofactor.

The protein resides in the mitochondrion membrane. 3'-5' exoribonuclease required for mitochondrial metabolism. The sequence is that of Exonuclease 3'-5' domain-containing protein 2 from Drosophila melanogaster (Fruit fly).